The chain runs to 834 residues: Protein argonaute (834 aa).

The region spanning 210–326 is the PAZ domain; sequence SLLQILMEYT…LPIEFCFVVK (117 aa). The 300-residue stretch at 500-799 folds into the Piwi domain; the sequence is YLFFILDKNS…VSNLARYQDV (300 aa).

This sequence belongs to the argonaute family. Ago subfamily. Ago1, chp1 and tas3 interact to form the core of the RNA-induced transcriptional silencing (RITS) complex. The RITS complex interacts with the RDRC complex via interaction between ago1 and hrr1. Clr4 has a role in mediating this interaction. Component of the argonaute siRNA chaperone (ARC) complex composed of ago1, arb1 and arb2. Interacts with arb1.

It localises to the cytoplasm. It is found in the nucleus. The protein resides in the chromosome. Its subcellular location is the centromere. The protein localises to the telomere. Required for G1 arrest and mating in response to nitrogen starvation. Ago1 regulation of cytokinesis and cell cycle checkpoints occurs downstream of dcr1. Required, indirectly, for regulated hyperphosphorylation of cdc2. Has a role in the RNA interference (RNAi) pathway which is important for heterochromatin formation, accurate chromosome segregation, centromere cohesion and telomere function during mitosis and meiosis. Required for silencing at the centromeres and for initiation of transcriptionally silent heterochromatin at the mating type locus. Promotes histone H3K9 methylation necessary for centromere function. Required for recruitment of swi6 and cohesin to an ectopic dg repeat. A member of the RNA-induced transcriptional silencing (RITS) complex which is involved in the biosynthesis of dsRNA from primer siRNAs provided by the RNA-directed RNA polymerase (RDRC) complex. Has ribonuclease H-like cleavage (slicing) activity towards target messages complementary to siRNA and can direct site-specific cleavage of RNA substrates via siRNA. Slicing activity is required for both post-transcriptional and transcriptional gene silencing as well as for histone H3 'Lys-10' methylation spreading, conversion of double-stranded siRNA to single-stranded siRNA and siRNA-dependent association of ago1 with chromatin. A member of the argonaute siRNA chaperone (ARC) complex which is required for histone H3K9 methylation, heterochromatin assembly and siRNA generation. The ARC complex contains mostly double-stranded siRNA. In Schizosaccharomyces pombe (strain 972 / ATCC 24843) (Fission yeast), this protein is Protein argonaute (ago1).